The chain runs to 248 residues: MATLIQRSLSLAKSSTPALQFLRFRGKINIQRPKAPHYERARVVAVTQPKYPELPKAKSCFKTRAERTQQQQENPYNEIIAREVRNWLDHSRLVAFFHLSSITADDIFRVRVQLHKQNLHLKSYGSKIIEQAVKNTRYEAIVPLFHSNHCIVFSPDPEKTAALLRIVRRVPQMVLLGGIVEETMLSRNQLVAYAQMPGLHAVQAQLVQTLSQAPGHLIQQLQAHQNSFVQVLDVHAKNQMNEETPKST.

The transit peptide at 1–24 (MATLIQRSLSLAKSSTPALQFLRF) directs the protein to the mitochondrion.

The protein belongs to the universal ribosomal protein uL10 family. As to quaternary structure, component of the mitochondrial ribosome large subunit (39S) which comprises a 16S rRNA and about 50 distinct proteins.

It is found in the mitochondrion. This chain is Large ribosomal subunit protein uL10m (mRpL10), found in Drosophila melanogaster (Fruit fly).